We begin with the raw amino-acid sequence, 254 residues long: 4-hydroxy-tetrahydrodipicolinate reductase (254 aa).

Residues 8–13 (GCSGKM), Asp35, 86–88 (CST), and 110–113 (SANM) each bind NAD(+). Catalysis depends on His143, which acts as the Proton donor/acceptor. His144 provides a ligand contact to (S)-2,3,4,5-tetrahydrodipicolinate. The active-site Proton donor is the Lys147. 153 to 154 (GT) lines the (S)-2,3,4,5-tetrahydrodipicolinate pocket.

This sequence belongs to the DapB family.

It is found in the cytoplasm. It catalyses the reaction (S)-2,3,4,5-tetrahydrodipicolinate + NAD(+) + H2O = (2S,4S)-4-hydroxy-2,3,4,5-tetrahydrodipicolinate + NADH + H(+). The catalysed reaction is (S)-2,3,4,5-tetrahydrodipicolinate + NADP(+) + H2O = (2S,4S)-4-hydroxy-2,3,4,5-tetrahydrodipicolinate + NADPH + H(+). The protein operates within amino-acid biosynthesis; L-lysine biosynthesis via DAP pathway; (S)-tetrahydrodipicolinate from L-aspartate: step 4/4. Catalyzes the conversion of 4-hydroxy-tetrahydrodipicolinate (HTPA) to tetrahydrodipicolinate. The protein is 4-hydroxy-tetrahydrodipicolinate reductase of Clostridium perfringens (strain 13 / Type A).